A 118-amino-acid chain; its full sequence is Large ribosomal subunit protein bL20 (118 aa).

This sequence belongs to the bacterial ribosomal protein bL20 family.

Its function is as follows. Binds directly to 23S ribosomal RNA and is necessary for the in vitro assembly process of the 50S ribosomal subunit. It is not involved in the protein synthesizing functions of that subunit. In Rhodopirellula baltica (strain DSM 10527 / NCIMB 13988 / SH1), this protein is Large ribosomal subunit protein bL20.